The following is a 489-amino-acid chain: Glutamate--tRNA ligase (489 aa).

The short motif at 11-21 (PSPTGHLHIGG) is the 'HIGH' region element. The 'KMSKS' region signature appears at 253 to 257 (KLSKR). Lys256 is a binding site for ATP.

Belongs to the class-I aminoacyl-tRNA synthetase family. Glutamate--tRNA ligase type 1 subfamily. Monomer.

It localises to the cytoplasm. The enzyme catalyses tRNA(Glu) + L-glutamate + ATP = L-glutamyl-tRNA(Glu) + AMP + diphosphate. Catalyzes the attachment of glutamate to tRNA(Glu) in a two-step reaction: glutamate is first activated by ATP to form Glu-AMP and then transferred to the acceptor end of tRNA(Glu). The chain is Glutamate--tRNA ligase from Geobacillus stearothermophilus (Bacillus stearothermophilus).